The following is a 263-amino-acid chain: Zinc finger protein STAMENLESS 1 (263 aa).

The segment at 1–51 (MNSSRRQEGSPLDLNNLPDEFGKQTVESSTTTAASSAEASRVTKKKSNGGK) is disordered. The segment covering 25–40 (TVESSTTTAASSAEAS) has biased composition (low complexity). A C2H2-type zinc finger spans residues 58-80 (YECRFCSLKFCKSQALGGHMNRH).

In terms of tissue distribution, expressed in leaf primordia, inflorescence meristem, rachis branch meristems, floral meristem and floral organ primordia.

Its subcellular location is the nucleus. Functionally, regulates floral organ identity and cell proliferation in the inner floral whorls. Probably specifies the identities of lodicule and stamen through positive regulation of MADS16 expression. May contribute to morphogenesis by suppressing OSH1 expression in the lateral organs. In Oryza sativa subsp. japonica (Rice), this protein is Zinc finger protein STAMENLESS 1 (SL1).